Here is a 255-residue protein sequence, read N- to C-terminus: Glutamate racemase (255 aa).

Residues 7–8 and 39–40 contribute to the substrate site; these read DS and YG. Catalysis depends on cysteine 70, which acts as the Proton donor/acceptor. Position 71 to 72 (71 to 72) interacts with substrate; sequence NT. Cysteine 181 serves as the catalytic Proton donor/acceptor. 182-183 contributes to the substrate binding site; it reads TH.

This sequence belongs to the aspartate/glutamate racemases family.

The enzyme catalyses L-glutamate = D-glutamate. It participates in cell wall biogenesis; peptidoglycan biosynthesis. Its function is as follows. Provides the (R)-glutamate required for cell wall biosynthesis. This Helicobacter acinonychis (strain Sheeba) protein is Glutamate racemase.